A 363-amino-acid polypeptide reads, in one-letter code: NAD(P)H-quinone oxidoreductase subunit 1, chloroplastic (363 aa).

Helical transmembrane passes span 26-46 (IIWI…GVLV), 98-118 (FSIG…VIPF), 127-147 (LTIG…GLLM), 246-266 (TEYS…NLLV), 268-288 (SLFV…YIFV), 300-320 (VFGP…FLFI), and 336-356 (LLNL…LLTT).

It belongs to the complex I subunit 1 family. NDH is composed of at least 16 different subunits, 5 of which are encoded in the nucleus.

The protein localises to the plastid. Its subcellular location is the chloroplast thylakoid membrane. It carries out the reaction a plastoquinone + NADH + (n+1) H(+)(in) = a plastoquinol + NAD(+) + n H(+)(out). It catalyses the reaction a plastoquinone + NADPH + (n+1) H(+)(in) = a plastoquinol + NADP(+) + n H(+)(out). Functionally, NDH shuttles electrons from NAD(P)H:plastoquinone, via FMN and iron-sulfur (Fe-S) centers, to quinones in the photosynthetic chain and possibly in a chloroplast respiratory chain. The immediate electron acceptor for the enzyme in this species is believed to be plastoquinone. Couples the redox reaction to proton translocation, and thus conserves the redox energy in a proton gradient. The protein is NAD(P)H-quinone oxidoreductase subunit 1, chloroplastic of Coffea arabica (Arabian coffee).